The chain runs to 428 residues: Serine--tRNA ligase (428 aa).

Residue 231-233 participates in L-serine binding; sequence TSE. ATP is bound by residues 262–264 and valine 278; that span reads RRE. Glutamate 285 contacts L-serine. An ATP-binding site is contributed by 349–352; it reads ELTS. L-serine is bound at residue threonine 384.

Belongs to the class-II aminoacyl-tRNA synthetase family. Type-1 seryl-tRNA synthetase subfamily. In terms of assembly, homodimer. The tRNA molecule binds across the dimer.

Its subcellular location is the cytoplasm. It catalyses the reaction tRNA(Ser) + L-serine + ATP = L-seryl-tRNA(Ser) + AMP + diphosphate + H(+). It carries out the reaction tRNA(Sec) + L-serine + ATP = L-seryl-tRNA(Sec) + AMP + diphosphate + H(+). It functions in the pathway aminoacyl-tRNA biosynthesis; selenocysteinyl-tRNA(Sec) biosynthesis; L-seryl-tRNA(Sec) from L-serine and tRNA(Sec): step 1/1. Catalyzes the attachment of serine to tRNA(Ser). Is also able to aminoacylate tRNA(Sec) with serine, to form the misacylated tRNA L-seryl-tRNA(Sec), which will be further converted into selenocysteinyl-tRNA(Sec). The polypeptide is Serine--tRNA ligase (Bifidobacterium longum subsp. infantis (strain ATCC 15697 / DSM 20088 / JCM 1222 / NCTC 11817 / S12)).